The following is a 23-amino-acid chain: Coenzyme PQQ synthesis protein A (23 aa).

A cross-link (pyrroloquinoline quinone (Glu-Tyr)) is located at residues 15 to 19 (EVTLY).

The protein belongs to the PqqA family.

The protein operates within cofactor biosynthesis; pyrroloquinoline quinone biosynthesis. Its function is as follows. Required for coenzyme pyrroloquinoline quinone (PQQ) biosynthesis. PQQ is probably formed by cross-linking a specific glutamate to a specific tyrosine residue and excising these residues from the peptide. This chain is Coenzyme PQQ synthesis protein A, found in Pseudomonas aeruginosa (strain UCBPP-PA14).